An 84-amino-acid polypeptide reads, in one-letter code: MAQTQSPLQWLATTLIRGYQVFISPILGPRCRFNPTCSHYAIEAIKVHGTAKGCWFALKRILKCHPLHPGGSDPVPPKNDRCNK.

The protein belongs to the UPF0161 family.

The protein resides in the cell inner membrane. Its function is as follows. Could be involved in insertion of integral membrane proteins into the membrane. The chain is Putative membrane protein insertion efficiency factor from Shewanella baltica (strain OS195).